We begin with the raw amino-acid sequence, 390 residues long: Elongation factor Tu 2 (390 aa).

Positions 10-201 (KPHVNVGTIG…LDEYVAVPPR (192 aa)) constitute a tr-type G domain. Residues 19-26 (GHVDHGKT) form a G1 region. 19–26 (GHVDHGKT) lines the GTP pocket. Position 26 (T26) interacts with Mg(2+). The segment at 55-59 (GITIA) is G2. The G3 stretch occupies residues 76–79 (DCPG). GTP-binding positions include 76 to 80 (DCPGH) and 131 to 134 (NKAD). The tract at residues 131–134 (NKAD) is G4. The interval 168-170 (SAL) is G5.

It belongs to the TRAFAC class translation factor GTPase superfamily. Classic translation factor GTPase family. EF-Tu/EF-1A subfamily. In terms of assembly, monomer.

It localises to the cytoplasm. The enzyme catalyses GTP + H2O = GDP + phosphate + H(+). Functionally, GTP hydrolase that promotes the GTP-dependent binding of aminoacyl-tRNA to the A-site of ribosomes during protein biosynthesis. In Wolbachia pipientis wMel, this protein is Elongation factor Tu 2.